We begin with the raw amino-acid sequence, 188 residues long: Adenylate kinase (188 aa).

12–17 (GSGKTT) contributes to the ATP binding site. Positions 33-62 (STGDLLRAEVASGSELGKKIDSFISKGNLV) are NMP. Residues Thr-34, Arg-39, 60–62 (NLV), 87–90 (GYPR), and Gln-94 contribute to the AMP site. Residues 129–135 (GRARGAD) are LID. Arg-130 is an ATP binding site. Residues Arg-132 and Arg-144 each contribute to the AMP site. Arg-172 serves as a coordination point for ATP.

The protein belongs to the adenylate kinase family. As to quaternary structure, monomer.

The protein localises to the cytoplasm. The enzyme catalyses AMP + ATP = 2 ADP. It functions in the pathway purine metabolism; AMP biosynthesis via salvage pathway; AMP from ADP: step 1/1. In terms of biological role, catalyzes the reversible transfer of the terminal phosphate group between ATP and AMP. Plays an important role in cellular energy homeostasis and in adenine nucleotide metabolism. The chain is Adenylate kinase from Campylobacter curvus (strain 525.92).